Reading from the N-terminus, the 187-residue chain is UPF0340 protein SPD_0576 (187 aa).

Belongs to the UPF0340 family.

The polypeptide is UPF0340 protein SPD_0576 (Streptococcus pneumoniae serotype 2 (strain D39 / NCTC 7466)).